The chain runs to 167 residues: G/U mismatch-specific DNA glycosylase (167 aa).

It belongs to the uracil-DNA glycosylase (UDG) superfamily. TDG/mug family. As to quaternary structure, binds DNA as a monomer.

The protein localises to the cytoplasm. It catalyses the reaction Specifically hydrolyzes mismatched double-stranded DNA and polynucleotides, releasing free uracil.. Functionally, excises ethenocytosine and uracil, which can arise by alkylation or deamination of cytosine, respectively, from the corresponding mispairs with guanine in ds-DNA. It is capable of hydrolyzing the carbon-nitrogen bond between the sugar-phosphate backbone of the DNA and the mispaired base. The complementary strand guanine functions in substrate recognition. Required for DNA damage lesion repair in stationary-phase cells. The polypeptide is G/U mismatch-specific DNA glycosylase (Pectobacterium carotovorum subsp. carotovorum (strain PC1)).